Reading from the N-terminus, the 78-residue chain is Acyl carrier protein (78 aa).

The region spanning 2–77 (STIEERVKKI…AAIDYVKAHQ (76 aa)) is the Carrier domain. O-(pantetheine 4'-phosphoryl)serine is present on serine 37.

This sequence belongs to the acyl carrier protein (ACP) family. Post-translationally, 4'-phosphopantetheine is transferred from CoA to a specific serine of apo-ACP by AcpS. This modification is essential for activity because fatty acids are bound in thioester linkage to the sulfhydryl of the prosthetic group.

The protein resides in the cytoplasm. It participates in lipid metabolism; fatty acid biosynthesis. In terms of biological role, carrier of the growing fatty acid chain in fatty acid biosynthesis. This chain is Acyl carrier protein, found in Pseudomonas putida (strain ATCC 700007 / DSM 6899 / JCM 31910 / BCRC 17059 / LMG 24140 / F1).